Reading from the N-terminus, the 463-residue chain is L-seryl-tRNA(Sec) selenium transferase (463 aa).

Lysine 295 carries the N6-(pyridoxal phosphate)lysine modification.

Belongs to the SelA family. As to quaternary structure, homodecamer; pentamer of dimers. Binds only one seryl-tRNA(Sec) per dimer. Requires pyridoxal 5'-phosphate as cofactor.

It is found in the cytoplasm. The enzyme catalyses L-seryl-tRNA(Sec) + selenophosphate + H(+) = L-selenocysteinyl-tRNA(Sec) + phosphate. Its pathway is aminoacyl-tRNA biosynthesis; selenocysteinyl-tRNA(Sec) biosynthesis; selenocysteinyl-tRNA(Sec) from L-seryl-tRNA(Sec) (bacterial route): step 1/1. Its function is as follows. Converts seryl-tRNA(Sec) to selenocysteinyl-tRNA(Sec) required for selenoprotein biosynthesis. The polypeptide is L-seryl-tRNA(Sec) selenium transferase (Shigella boydii serotype 4 (strain Sb227)).